A 181-amino-acid polypeptide reads, in one-letter code: dTDP-4-dehydrorhamnose 3,5-epimerase (181 aa).

Residues R23, E28, 47–49 (QDN), and R59 contribute to the substrate site. H62 serves as the catalytic Proton acceptor. The substrate site is built by K72 and H119. Y132 functions as the Proton donor in the catalytic mechanism. The substrate site is built by E143 and K167.

This sequence belongs to the dTDP-4-dehydrorhamnose 3,5-epimerase family. In terms of assembly, homodimer.

It catalyses the reaction dTDP-4-dehydro-6-deoxy-alpha-D-glucose = dTDP-4-dehydro-beta-L-rhamnose. It participates in carbohydrate biosynthesis; dTDP-L-rhamnose biosynthesis. The protein operates within bacterial outer membrane biogenesis; LPS O-antigen biosynthesis. Functionally, catalyzes the epimerization of the C3' and C5'positions of dTDP-6-deoxy-D-xylo-4-hexulose, forming dTDP-6-deoxy-L-lyxo-4-hexulose. The protein is dTDP-4-dehydrorhamnose 3,5-epimerase (rfbC) of Shigella flexneri.